The following is a 90-amino-acid chain: MKTAIFTVVLALAVFAVLSFGWEANEKALSEEFTELIHEKEAASETEARGCRYFWGECHDHMPCCDWLVCRYKWPITYNICVWNRTFPEK.

Positions 1–19 are cleaved as a signal peptide; it reads MKTAIFTVVLALAVFAVLS. A propeptide spanning residues 20–50 is cleaved from the precursor; sequence FGWEANEKALSEEFTELIHEKEAASETEARG. Disulfide bonds link cysteine 51-cysteine 65, cysteine 58-cysteine 70, and cysteine 64-cysteine 81.

This sequence belongs to the neurotoxin 10 (Hwtx-1) family. 13 (Hntx-13) subfamily. In terms of tissue distribution, expressed by the venom gland.

It is found in the secreted. Its function is as follows. Ion channel inhibitor. The protein is U7-theraphotoxin-Hhn1f of Cyriopagopus hainanus (Chinese bird spider).